Here is a 228-residue protein sequence, read N- to C-terminus: Ribose-5-phosphate isomerase A (228 aa).

Substrate contacts are provided by residues 27–30, 86–89, and 100–103; these read TGTT, DGAD, and KGMG. Residue glutamate 109 is the Proton acceptor of the active site. Residue lysine 127 participates in substrate binding.

Belongs to the ribose 5-phosphate isomerase family. Homodimer.

It carries out the reaction aldehydo-D-ribose 5-phosphate = D-ribulose 5-phosphate. It functions in the pathway carbohydrate degradation; pentose phosphate pathway; D-ribose 5-phosphate from D-ribulose 5-phosphate (non-oxidative stage): step 1/1. In terms of biological role, catalyzes the reversible conversion of ribose-5-phosphate to ribulose 5-phosphate. The sequence is that of Ribose-5-phosphate isomerase A from Borreliella burgdorferi (strain ZS7) (Borrelia burgdorferi).